The chain runs to 211 residues: Synaptosomal-associated protein 23 (211 aa).

Met-1 bears the N-acetylmethionine mark. 5 positions are modified to phosphoserine: Ser-5, Ser-6, Ser-20, Ser-23, and Ser-34. Residues 14 to 76 (HQITDESLES…RETEKTLTEL (63 aa)) form the t-SNARE coiled-coil homology 1 domain. Residues 23 to 76 (STRRILGLAIESQDAGIKTITMLDEQKEQLNRIEEGLDQINKDMRETEKTLTEL) adopt a coiled-coil conformation. 5 S-palmitoyl cysteine lipidation sites follow: Cys-79, Cys-80, Cys-83, Cys-85, and Cys-87. Phosphoserine is present on Ser-110. The S-palmitoyl cysteine moiety is linked to residue Cys-112. The t-SNARE coiled-coil homology 2 domain maps to 146–208 (DAREDEMEEN…DIANARAKKL (63 aa)). Ser-161 carries the post-translational modification Phosphoserine.

The protein belongs to the SNAP-25 family. Homotetramer (via coiled-coil domain), also forms heterotetramers with STX4 and VAMP3. Found in a complex with VAMP8 and STX1A. Found in a complex with VAMP8 and STX4 in pancreas. Interacts simultaneously with SNAPIN and SYN4. Interacts with STX1A. Interacts with STX12. Interacts tightly to multiple syntaxins and synaptobrevins/VAMPs. Interacts with ZDHHC13 (via ANK repeats). Interacts with ZDHHC17 (via ANK repeats). As to expression, ubiquitous. Highest levels where found in placenta.

The protein localises to the cell membrane. It localises to the synapse. The protein resides in the synaptosome. Its function is as follows. Essential component of the high affinity receptor for the general membrane fusion machinery and an important regulator of transport vesicle docking and fusion. This chain is Synaptosomal-associated protein 23 (SNAP23), found in Homo sapiens (Human).